Reading from the N-terminus, the 631-residue chain is Nucleoside triphosphatase I (631 aa).

The region spanning 42-204 (FLGLDSMHSL…TMLVNLLRPG (163 aa)) is the Helicase ATP-binding domain. Residue 55–62 (HETGVGKT) participates in ATP binding. The short motif at 141 to 144 (DECH) is the DEXH box element. Residues 367 to 532 (KFIDVCLGIL…EFVQLFRVFK (166 aa)) enclose the Helicase C-terminal domain.

The protein belongs to the helicase family. NPH I subfamily. As to quaternary structure, monomer.

It carries out the reaction a ribonucleoside 5'-triphosphate + H2O = a ribonucleoside 5'-diphosphate + phosphate + H(+). Serves two roles in transcription; it acts in concert with viral termination factor/capping enzyme to catalyze release of UUUUUNU-containing nascent RNA from the elongation complex, and it acts by itself as a polymerase elongation factor to facilitate readthrough of intrinsic pause sites. The protein is Nucleoside triphosphatase I (NPH1) of Homo sapiens (Human).